Consider the following 31-residue polypeptide: Phallacidin proprotein 1 (31 aa).

Residues 1–10 (MSDINATRLP) constitute a propeptide that is removed on maturation. The cyclopeptide (Ala-Pro) cross-link spans 11-17 (AWLVDCP). The 2'-cysteinyl-6'-hydroxytryptophan sulfoxide (Trp-Cys) cross-link spans 12-16 (WLVDC). Positions 18–31 (CVGDDVNRLLTRGE) are excised as a propeptide.

Belongs to the MSDIN fungal toxin family. In terms of processing, processed by the macrocyclase-peptidase enzyme POPB to yield a toxic cyclic heptapeptide. POPB first removes 10 residues from the N-terminus. Conformational trapping of the remaining peptide forces the enzyme to release this intermediate rather than proceed to macrocyclization. The enzyme rebinds the remaining peptide in a different conformation and catalyzes macrocyclization of the N-terminal 7 residues.

Its function is as follows. Major toxin that belongs to the bicyclic heptapeptides called phallotoxins. Although structurally related to amatoxins, phallotoxins have a different mode of action, which is the stabilization of F-actin. Phallotoxins are poisonous when administered parenterally, but not orally because of poor absorption. This Amanita bisporigera (Destroying angel) protein is Phallacidin proprotein 1 (PHA1_2).